A 469-amino-acid polypeptide reads, in one-letter code: 3-isopropylmalate dehydratase large subunit (469 aa).

Positions 350, 410, and 413 each coordinate [4Fe-4S] cluster.

The protein belongs to the aconitase/IPM isomerase family. LeuC type 1 subfamily. Heterodimer of LeuC and LeuD. The cofactor is [4Fe-4S] cluster.

The catalysed reaction is (2R,3S)-3-isopropylmalate = (2S)-2-isopropylmalate. Its pathway is amino-acid biosynthesis; L-leucine biosynthesis; L-leucine from 3-methyl-2-oxobutanoate: step 2/4. In terms of biological role, catalyzes the isomerization between 2-isopropylmalate and 3-isopropylmalate, via the formation of 2-isopropylmaleate. This is 3-isopropylmalate dehydratase large subunit from Mesorhizobium japonicum (strain LMG 29417 / CECT 9101 / MAFF 303099) (Mesorhizobium loti (strain MAFF 303099)).